The sequence spans 829 residues: Leucine--tRNA ligase (829 aa).

Residues proline 42–histidine 52 carry the 'HIGH' region motif. The 'KMSKS' region signature appears at lysine 584 to serine 588. ATP is bound at residue lysine 587.

The protein belongs to the class-I aminoacyl-tRNA synthetase family.

It is found in the cytoplasm. The enzyme catalyses tRNA(Leu) + L-leucine + ATP = L-leucyl-tRNA(Leu) + AMP + diphosphate. The polypeptide is Leucine--tRNA ligase (Syntrophobacter fumaroxidans (strain DSM 10017 / MPOB)).